The sequence spans 602 residues: VIN3-like protein 1 (602 aa).

Residues 1–38 (MDSSSTKSKISHSRKTNKKSNKKHESNGKQQQQQDVDG) are disordered. Over residues 9-22 (KISHSRKTNKKSNK) the composition is skewed to basic residues. The PHD-type zinc-finger motif lies at 67 to 137 (RCSCCVCHNF…CFCCYSCGKV (71 aa)). The short motif at 144-151 (WKKQLVAA) is the Nuclear localization signal element. The 99-residue stretch at 242–340 (VPAACRFHFE…AMCFTKSVEI (99 aa)) folds into the Fibronectin type-III domain. The interval 430–470 (LNEEFTPPDSSGGEDNGVPLNSLAEADGGDHDDNCDDAVSN) is disordered. The segment at 502-602 (AISDSNDSEN…RPNNGVMTSH (101 aa)) is VIN3-Interacting Domain (VID).

As to quaternary structure, interacts with VIN3 and VIL2. The heterodimer made of VIN3 and VIL1 is required for establishing the vernalization-induced epigenetic silencing of FLC. Component of the plant homeodomain / polycomb repressive complex 2 (PHD-PRC2) large complex during prolonged cold, composed of core PRC2 components (VRN2, EZA1, FIE and MSI1), and three related PHD finger proteins (VIL1, VIL2 and VIN3) that mediates histone H3 trimethylation on 'Lys-27' (H3K27me3). Accumulates in shoot and root apices, and in leaves.

It is found in the nucleus. Its subcellular location is the nucleus speckle. Its function is as follows. Involved in both the vernalization and photoperiod pathways by regulating expression of the related floral repressors FLOWERING LOCUS C (FLC) and FLOWERING LOCUS M (FLM). Together with VIN3, required during vernalization for the modifications of FLC and FLM chromatin that are associated with an epigenetically silenced state (e.g. chromatin modifications, histone deacetylation, and trimethylated H3 'Lys-4' H3K4me3 and 'Lys-27' H3K27me3) and with acquisition of competence to flower. Promotes flowering in short days (SD=8 hours light/16 hours dark). Associates dynamically at FLC locus; during vernalization, binds to specific sites, but when in warm conditions, distributed along the whole locus. This is VIN3-like protein 1 (VIL1) from Arabidopsis thaliana (Mouse-ear cress).